Here is a 407-residue protein sequence, read N- to C-terminus: Phosphopentomutase (407 aa).

6 residues coordinate Mn(2+): Asp10, Asp306, His311, Asp347, His348, and His359.

This sequence belongs to the phosphopentomutase family. The cofactor is Mn(2+).

It localises to the cytoplasm. It catalyses the reaction 2-deoxy-alpha-D-ribose 1-phosphate = 2-deoxy-D-ribose 5-phosphate. The catalysed reaction is alpha-D-ribose 1-phosphate = D-ribose 5-phosphate. Its pathway is carbohydrate degradation; 2-deoxy-D-ribose 1-phosphate degradation; D-glyceraldehyde 3-phosphate and acetaldehyde from 2-deoxy-alpha-D-ribose 1-phosphate: step 1/2. Its function is as follows. Isomerase that catalyzes the conversion of deoxy-ribose 1-phosphate (dRib-1-P) and ribose 1-phosphate (Rib-1-P) to deoxy-ribose 5-phosphate (dRib-5-P) and ribose 5-phosphate (Rib-5-P), respectively. This is Phosphopentomutase from Yersinia enterocolitica serotype O:8 / biotype 1B (strain NCTC 13174 / 8081).